The chain runs to 407 residues: Peptidase T (407 aa).

Residue H77 coordinates Zn(2+). The active site involves D79. Residue D138 coordinates Zn(2+). E172 (proton acceptor) is an active-site residue. Residues E173, D195, and H377 each coordinate Zn(2+).

It belongs to the peptidase M20B family. Requires Zn(2+) as cofactor.

The protein localises to the cytoplasm. The enzyme catalyses Release of the N-terminal residue from a tripeptide.. Functionally, cleaves the N-terminal amino acid of tripeptides. The chain is Peptidase T from Aeromonas salmonicida (strain A449).